The chain runs to 83 residues: Large ribosomal subunit protein bL27 (83 aa).

A disordered region spans residues 1–25; the sequence is MAHKKGQGASRNGRDSESKRLGLKV.

Belongs to the bacterial ribosomal protein bL27 family.

This is Large ribosomal subunit protein bL27 from Chlamydia muridarum (strain MoPn / Nigg).